The primary structure comprises 631 residues: Phosphomethylpyrimidine synthase (631 aa).

Residues asparagine 239, methionine 268, tyrosine 297, histidine 333, 353-355 (SRG), 394-397 (DGLR), and glutamate 433 contribute to the substrate site. Zn(2+) is bound at residue histidine 437. Tyrosine 460 lines the substrate pocket. Zn(2+) is bound at residue histidine 501. Cysteine 581, cysteine 584, and cysteine 589 together coordinate [4Fe-4S] cluster.

The protein belongs to the ThiC family. Homodimer. [4Fe-4S] cluster serves as cofactor.

It catalyses the reaction 5-amino-1-(5-phospho-beta-D-ribosyl)imidazole + S-adenosyl-L-methionine = 4-amino-2-methyl-5-(phosphooxymethyl)pyrimidine + CO + 5'-deoxyadenosine + formate + L-methionine + 3 H(+). It participates in cofactor biosynthesis; thiamine diphosphate biosynthesis. Functionally, catalyzes the synthesis of the hydroxymethylpyrimidine phosphate (HMP-P) moiety of thiamine from aminoimidazole ribotide (AIR) in a radical S-adenosyl-L-methionine (SAM)-dependent reaction. This chain is Phosphomethylpyrimidine synthase, found in Escherichia coli (strain SMS-3-5 / SECEC).